Here is a 470-residue protein sequence, read N- to C-terminus: Histone deacetylase HOS1 (470 aa).

The interval 47 to 392 is histone deacetylase; it reads LTFPYARKDD…YTYLTWCVTK (346 aa). At serine 110 the chain carries Phosphoserine. The active site involves histidine 211.

The protein belongs to the histone deacetylase family. HD type 1 subfamily.

It is found in the nucleus. It catalyses the reaction N(6)-acetyl-L-lysyl-[histone] + H2O = L-lysyl-[histone] + acetate. Responsible for the deacetylation of lysine residues on the N-terminal part of the core histones (H2A, H2B, H3 and H4). Histone deacetylation plays an important role in transcriptional regulation, cell cycle progression and developmental events. Histone deacetylases act via the formation of large multiprotein complexes. This chain is Histone deacetylase HOS1 (HOS1), found in Saccharomyces cerevisiae (strain ATCC 204508 / S288c) (Baker's yeast).